A 405-amino-acid polypeptide reads, in one-letter code: MTVDRQALGFGYGEHAAYASNPWASRGRLYPEASSPTRSDFQRDRDRIVHTTAFRRLKHKTQVFIAADGDHYRTRLTHTIEVAQIARALARALNLDEDLAEGVALVHDFGHTPFGHTGEDALDEVLKPYGGFDHNAQSLRIVTKLERRYAEFDGLNLTWESLEGLVKHNGPLTTADGQGLRGPVSQPILDYCALHDLELASFASLEAQVAAIADDIAYNTHDIDDGLRAGYLTFEMLEEIPFLARLMYEVRDRYPGLESSRFTHEIMRRQITAMVEDVIGVSQRGLADVRPASARDVRCAGRVIATFSDEMSETDRQIKNLLMTRIYRHPEVMRVREGAASIVTDLYRAFMDDPSLMKEHYWIDQIAGMEEPARARHVGDYLAGMTDTFAISVHRRLFDHTPDLR.

The region spanning 75–219 (RLTHTIEVAQ…AAIADDIAYN (145 aa)) is the HD domain.

The protein belongs to the dGTPase family. Type 2 subfamily.

This is Deoxyguanosinetriphosphate triphosphohydrolase-like protein from Sinorhizobium medicae (strain WSM419) (Ensifer medicae).